Here is a 338-residue protein sequence, read N- to C-terminus: tRNA N6-adenosine threonylcarbamoyltransferase (338 aa).

Fe cation contacts are provided by His111 and His115. Substrate is bound by residues 134–138 (LVSGG), Asp167, Gly180, and Asn272. Residue Asp300 coordinates Fe cation.

Belongs to the KAE1 / TsaD family. The cofactor is Fe(2+).

The protein localises to the cytoplasm. It catalyses the reaction L-threonylcarbamoyladenylate + adenosine(37) in tRNA = N(6)-L-threonylcarbamoyladenosine(37) in tRNA + AMP + H(+). In terms of biological role, required for the formation of a threonylcarbamoyl group on adenosine at position 37 (t(6)A37) in tRNAs that read codons beginning with adenine. Is involved in the transfer of the threonylcarbamoyl moiety of threonylcarbamoyl-AMP (TC-AMP) to the N6 group of A37, together with TsaE and TsaB. TsaD likely plays a direct catalytic role in this reaction. The sequence is that of tRNA N6-adenosine threonylcarbamoyltransferase from Vibrio parahaemolyticus serotype O3:K6 (strain RIMD 2210633).